We begin with the raw amino-acid sequence, 430 residues long: Acetyl-CoA acetyltransferase FG05087, mitochondrial (430 aa).

The transit peptide at 1-32 (MTVTQLRSAGRLAQLAGHVNGARQFSTRPALR) directs the protein to the mitochondrion. The active-site Acyl-thioester intermediate is cysteine 122. A K(+)-binding site is contributed by tyrosine 217. Lysine 260 serves as a coordination point for CoA. Position 278 (alanine 278) interacts with K(+). Residue serine 282 coordinates CoA. Catalysis depends on proton acceptor residues histidine 385 and cysteine 413. Asparagine 414 is a binding site for chloride.

This sequence belongs to the thiolase-like superfamily. Thiolase family. As to quaternary structure, homotetramer. It depends on K(+) as a cofactor.

The protein resides in the mitochondrion. It catalyses the reaction 2 acetyl-CoA = acetoacetyl-CoA + CoA. Functionally, mitochondrial acetyl-CoA acetyltransferase that catalyzes both the formation and degradation of acetoacetyl-CoA. Seems not to be involved in ergosterol biosynthesis. Plays an important role in growth, morphogenesis and maintaining mitochondrial function including the response to oxidative stresses. This is Acetyl-CoA acetyltransferase FG05087, mitochondrial from Gibberella zeae (strain ATCC MYA-4620 / CBS 123657 / FGSC 9075 / NRRL 31084 / PH-1) (Wheat head blight fungus).